Here is a 471-residue protein sequence, read N- to C-terminus: Heat shock 70 kDa protein 13 (471 aa).

The N-terminal stretch at 1 to 22 (MAGEMTILGSAVLTLLLAGYLA) is a signal peptide. Positions 315–337 (ENDRKGPPTSDSELPKDKFSQAN) are disordered.

This sequence belongs to the heat shock protein 70 family. In terms of assembly, binds UBQLN2.

The protein resides in the microsome. It localises to the endoplasmic reticulum. In terms of biological role, has peptide-independent ATPase activity. This chain is Heat shock 70 kDa protein 13 (HSPA13), found in Bos taurus (Bovine).